The following is a 114-amino-acid chain: Protein Tat (114 aa).

Residues 1–24 form an interaction with human CREBBP region; that stretch reads MDPVDPEVPPWHHPGSQPQIPCNN. Positions 1 to 48 are transactivation; that stretch reads MDPVDPEVPPWHHPGSQPQIPCNNCYCKRCCYHCYVCFVRKGLGISYG. Residues C22, C25, and C27 each coordinate Zn(2+). Positions 22–37 are cysteine-rich; sequence CNNCYCKRCCYHCYVC. K28 is subject to N6-acetyllysine; by host PCAF. Zn(2+)-binding residues include C30, H33, C34, and C37. Residues 38–48 are core; that stretch reads FVRKGLGISYG. The interval 48–114 is disordered; that stretch reads GRKKRGRPAA…CHCCTRTSEQ (67 aa). A Nuclear localization signal, RNA-binding (TAR), and protein transduction motif is present at residues 49-56; that stretch reads RKKRGRPA. Residues 49 to 84 are interaction with the host capping enzyme RNGTT; it reads RKKRGRPAAASHPDHKDPVPKQSPTITKRKQERQEE. Residues K50 and K51 each carry the N6-acetyllysine; by host EP300 and GCN5L2 modification. R52 bears the Asymmetric dimethylarginine; by host PRMT6 mark. K69 is covalently cross-linked (Glycyl lysine isopeptide (Lys-Gly) (interchain with G-Cter in ubiquitin)).

It belongs to the lentiviruses Tat family. As to quaternary structure, interacts with host CCNT1. Associates with the P-TEFb complex composed at least of Tat, P-TEFb (CDK9 and CCNT1), TAR RNA, RNA Pol II. Recruits the HATs CREBBP, TAF1/TFIID, EP300, PCAF and GCN5L2. Interacts with host KAT5/Tip60; this interaction targets the latter to degradation. Interacts with the host deacetylase SIRT1. Interacts with host capping enzyme RNGTT; this interaction stimulates RNGTT. Binds to host KDR, and to the host integrins ITGAV/ITGB3 and ITGA5/ITGB1. Interacts with host KPNB1/importin beta-1 without previous binding to KPNA1/importin alpha-1. Interacts with EIF2AK2. Interacts with host nucleosome assembly protein NAP1L1; this interaction may be required for the transport of Tat within the nucleus, since the two proteins interact at the nuclear rim. Interacts with host C1QBP/SF2P32; this interaction involves lysine-acetylated Tat. Interacts with the host chemokine receptors CCR2, CCR3 and CXCR4. Interacts with host DPP4/CD26; this interaction may trigger an anti-proliferative effect. Interacts with host LDLR. Interacts with the host extracellular matrix metalloproteinase MMP1. Interacts with host PRMT6; this interaction mediates Tat's methylation. Interacts with, and is ubiquitinated by MDM2/Hdm2. Interacts with host PSMC3 and HTATIP2. Interacts with STAB1; this interaction may overcome SATB1-mediated repression of IL2 and IL2RA (interleukin) in T cells by binding to the same domain than HDAC1. Interacts (when acetylated) with human CDK13, thereby increasing HIV-1 mRNA splicing and promoting the production of the doubly spliced HIV-1 protein Nef. Interacts with host TBP; this interaction modulates the activity of transcriptional pre-initiation complex. Interacts with host RELA. Interacts with host PLSCR1; this interaction negatively regulates Tat transactivation activity by altering its subcellular distribution. In terms of processing, asymmetrical arginine methylation by host PRMT6 seems to diminish the transactivation capacity of Tat and affects the interaction with host CCNT1. Post-translationally, acetylation by EP300, CREBBP, GCN5L2/GCN5 and PCAF regulates the transactivation activity of Tat. EP300-mediated acetylation of Lys-50 promotes dissociation of Tat from the TAR RNA through the competitive binding to PCAF's bromodomain. In addition, the non-acetylated Tat's N-terminus can also interact with PCAF. PCAF-mediated acetylation of Lys-28 enhances Tat's binding to CCNT1. Lys-50 is deacetylated by SIRT1. Polyubiquitination by host MDM2 does not target Tat to degradation, but activates its transactivation function and fosters interaction with CCNT1 and TAR RNA. In terms of processing, phosphorylated by EIF2AK2 on serine and threonine residues adjacent to the basic region important for TAR RNA binding and function. Phosphorylation of Tat by EIF2AK2 is dependent on the prior activation of EIF2AK2 by dsRNA.

It is found in the host nucleus. The protein localises to the host nucleolus. Its subcellular location is the host cytoplasm. The protein resides in the secreted. In terms of biological role, transcriptional activator that increases RNA Pol II processivity, thereby increasing the level of full-length viral transcripts. Recognizes a hairpin structure at the 5'-LTR of the nascent viral mRNAs referred to as the transactivation responsive RNA element (TAR) and recruits the cyclin T1-CDK9 complex (P-TEFb complex) that will in turn hyperphosphorylate the RNA polymerase II to allow efficient elongation. The CDK9 component of P-TEFb and other Tat-activated kinases hyperphosphorylate the C-terminus of RNA Pol II that becomes stabilized and much more processive. Other factors such as HTATSF1/Tat-SF1, SUPT5H/SPT5, and HTATIP2 are also important for Tat's function. Besides its effect on RNA Pol II processivity, Tat induces chromatin remodeling of proviral genes by recruiting the histone acetyltransferases (HATs) CREBBP, EP300 and PCAF to the chromatin. This also contributes to the increase in proviral transcription rate, especially when the provirus integrates in transcriptionally silent region of the host genome. To ensure maximal activation of the LTR, Tat mediates nuclear translocation of NF-kappa-B by interacting with host RELA. Through its interaction with host TBP, Tat may also modulate transcription initiation. Tat can reactivate a latently infected cell by penetrating in it and transactivating its LTR promoter. In the cytoplasm, Tat is thought to act as a translational activator of HIV-1 mRNAs. Its function is as follows. Extracellular circulating Tat can be endocytosed by surrounding uninfected cells via the binding to several surface receptors such as CD26, CXCR4, heparan sulfate proteoglycans (HSPG) or LDLR. Neurons are rarely infected, but they internalize Tat via their LDLR. Through its interaction with nuclear HATs, Tat is potentially able to control the acetylation-dependent cellular gene expression. Modulates the expression of many cellular genes involved in cell survival, proliferation or in coding for cytokines or cytokine receptors. Tat plays a role in T-cell and neurons apoptosis. Tat induced neurotoxicity and apoptosis probably contribute to neuroAIDS. Circulating Tat also acts as a chemokine-like and/or growth factor-like molecule that binds to specific receptors on the surface of the cells, affecting many cellular pathways. In the vascular system, Tat binds to ITGAV/ITGB3 and ITGA5/ITGB1 integrins dimers at the surface of endothelial cells and competes with bFGF for heparin-binding sites, leading to an excess of soluble bFGF. The chain is Protein Tat from Homo sapiens (Human).